A 412-amino-acid chain; its full sequence is Phosphoglycerate kinase (412 aa).

The (2R)-3-phosphoglycerate site is built by V20, D21, F22, N23, Q35, R36, S59, H60, G62, R63, L118, R119, H166, and R167. Residue G210 coordinates ADP. Residue G210 coordinates CDP. AMP contacts are provided by A211 and K212. An ATP-binding site is contributed by A211. A211 lines the Mg(2+) pocket. Residues A214 and D215 each contribute to the Mg(2+) site. D215 provides a ligand contact to CDP. K216 contributes to the AMP binding site. Residue K216 coordinates ATP. Position 234 (G234) interacts with ADP. Position 234 (G234) interacts with CDP. Residues G235 and G308 each coordinate AMP. ATP-binding residues include G235 and G308. CDP-binding residues include G333 and F338. F338 is an ADP binding site. E339 is an AMP binding site. Residues E339, D370, and T371 each contribute to the ATP site. D370 is a binding site for Mg(2+).

Belongs to the phosphoglycerate kinase family. Monomer. Requires Mg(2+) as cofactor.

The protein resides in the cytoplasm. The catalysed reaction is (2R)-3-phosphoglycerate + ATP = (2R)-3-phospho-glyceroyl phosphate + ADP. The protein operates within carbohydrate degradation; glycolysis; pyruvate from D-glyceraldehyde 3-phosphate: step 2/5. Its function is as follows. Catalyzes one of the two ATP producing reactions in the glycolytic pathway via the reversible conversion of 1,3-diphosphoglycerate to 3-phosphoglycerate. In addition to its role as a glycolytic enzyme, it seems that PGK-1 acts as a polymerase alpha cofactor protein (primer recognition protein). May play a role in sperm motility. The chain is Phosphoglycerate kinase (PGK) from Aplysia californica (California sea hare).